A 345-amino-acid chain; its full sequence is Methionine import ATP-binding protein MetN (345 aa).

The 240-residue stretch at 2–241 (IKLNNITKIF…PKTELAQEFI (240 aa)) folds into the ABC transporter domain. Residue 38-45 (GASGAGKS) coordinates ATP.

This sequence belongs to the ABC transporter superfamily. Methionine importer (TC 3.A.1.24) family. As to quaternary structure, the complex is composed of two ATP-binding proteins (MetN), two transmembrane proteins (MetI) and a solute-binding protein (MetQ).

The protein resides in the cell inner membrane. It catalyses the reaction L-methionine(out) + ATP + H2O = L-methionine(in) + ADP + phosphate + H(+). The catalysed reaction is D-methionine(out) + ATP + H2O = D-methionine(in) + ADP + phosphate + H(+). Part of the ABC transporter complex MetNIQ involved in methionine import. Responsible for energy coupling to the transport system. In Haemophilus influenzae (strain 86-028NP), this protein is Methionine import ATP-binding protein MetN.